A 50-amino-acid polypeptide reads, in one-letter code: Large ribosomal subunit protein bL33B (50 aa).

This sequence belongs to the bacterial ribosomal protein bL33 family.

In Streptococcus agalactiae serotype V (strain ATCC BAA-611 / 2603 V/R), this protein is Large ribosomal subunit protein bL33B.